The chain runs to 176 residues: Nucleoside triphosphate/diphosphate phosphatase (176 aa).

The active-site Proton donor is R23. 6 residues coordinate Mg(2+): N87, D103, D105, D107, D120, and E123.

The protein belongs to the Ntdp family. Requires Mg(2+) as cofactor.

The enzyme catalyses a ribonucleoside 5'-triphosphate + H2O = a ribonucleoside 5'-diphosphate + phosphate + H(+). It catalyses the reaction a ribonucleoside 5'-diphosphate + H2O = a ribonucleoside 5'-phosphate + phosphate + H(+). Functionally, has nucleoside phosphatase activity towards nucleoside triphosphates and nucleoside diphosphates. The polypeptide is Nucleoside triphosphate/diphosphate phosphatase (Bacillus cereus (strain AH820)).